The chain runs to 248 residues: Small ribosomal subunit protein uS2 (248 aa).

Belongs to the universal ribosomal protein uS2 family.

This chain is Small ribosomal subunit protein uS2, found in Dechloromonas aromatica (strain RCB).